The following is a 491-amino-acid chain: MKYRDLRDFISQLEQLGELKRITVPVDPKLEMTEICDRTLRAGGPALLFENPVGFGTPVLGNLFGTERRVALGMGRDSVAELRELGELLAFLKEPEPPKGFRDAWEKLPVFRKVLSMSPKVSSSGPCQEKVLEGDEVDLYKLPIQTCWPDDAGPLVTWPLVITRGPNKERQNLGIYRQQLIGRNKLIMRWLSHRGGALDFQEWQQQHPGEPFPVSVALGADPATILGAVTPVPDTLSEYAFAGLLRGSKTELVKCIGNDLQVPASAEFVLEGFLYPGDMADEGPFGDHTGYYNEVERFPVFTVERITHRRNPIYHSTYTGRPPDEPAVLGVAMNEIFVPILKKQFPEIVDFYLPPEGCSYRMAVVTMKKQYPGHAKRVMMGVWSFLRQFMYTKFVIVCDDDVNARDWKDVIWAMTTRMDPARDTVMIENTPIDYLDFASPVAGLGSKMGMDATNKWAGETTREWGRAIAMDPAVKTRVDEMWSSLGIDTPE.

Asparagine 172 contacts Mn(2+). Prenylated FMN-binding positions include 175-177, 189-191, and 194-195; these read IYR, RWL, and RG. Glutamate 238 lines the Mn(2+) pocket. The active-site Proton donor is the aspartate 287.

It belongs to the UbiD family. In terms of assembly, homohexamer. Requires prenylated FMN as cofactor. Mn(2+) is required as a cofactor.

It is found in the cell membrane. The enzyme catalyses a 4-hydroxy-3-(all-trans-polyprenyl)benzoate + H(+) = a 2-(all-trans-polyprenyl)phenol + CO2. It participates in cofactor biosynthesis; ubiquinone biosynthesis. Functionally, catalyzes the decarboxylation of 3-octaprenyl-4-hydroxy benzoate to 2-octaprenylphenol, an intermediate step in ubiquinone biosynthesis. The polypeptide is 3-octaprenyl-4-hydroxybenzoate carboxy-lyase (Alcanivorax borkumensis (strain ATCC 700651 / DSM 11573 / NCIMB 13689 / SK2)).